The following is a 101-amino-acid chain: MRTIVLFSTLMILVLSCMSNATVKSYSEEKTHSFDLTANPPIDLNIVDELPRDEHLGVSHADNVIGFCQECAHHCLQRKRVLGECRWFTCHCSRITIGVGL.

A signal peptide spans 1-21 (MRTIVLFSTLMILVLSCMSNA). Cystine bridges form between cysteine 68–cysteine 85, cysteine 71–cysteine 90, and cysteine 75–cysteine 92.

This sequence belongs to the DEFL family.

Its subcellular location is the secreted. The polypeptide is Defensin-like protein 222 (Arabidopsis thaliana (Mouse-ear cress)).